We begin with the raw amino-acid sequence, 861 residues long: 1,4-alpha-glucan-branching enzyme (861 aa).

Residues W173 and K208 each contribute to the (1,4-alpha-D-glucosyl)n site. D429 functions as the Nucleophile in the catalytic mechanism. Catalysis depends on E484, which acts as the Proton donor.

It belongs to the glycosyl hydrolase 13 family. GlgB subfamily. Monomer.

The protein resides in the plastid. Its subcellular location is the chloroplast. It is found in the amyloplast. It carries out the reaction Transfers a segment of a (1-&gt;4)-alpha-D-glucan chain to a primary hydroxy group in a similar glucan chain.. Its pathway is glycan biosynthesis; starch biosynthesis. Its function is as follows. Catalyzes the formation of the alpha-1,6-glucosidic linkages in starch by scission of a 1,4-alpha-linked oligosaccharide from growing alpha-1,4-glucan chains and the subsequent attachment of the oligosaccharide to the alpha-1,6 position. This chain is 1,4-alpha-glucan-branching enzyme (SBE1), found in Solanum tuberosum (Potato).